We begin with the raw amino-acid sequence, 344 residues long: Protein RecA (344 aa).

An ATP-binding site is contributed by 65-72; sequence GPESSGKT.

The protein belongs to the RecA family.

It is found in the cytoplasm. Its function is as follows. Can catalyze the hydrolysis of ATP in the presence of single-stranded DNA, the ATP-dependent uptake of single-stranded DNA by duplex DNA, and the ATP-dependent hybridization of homologous single-stranded DNAs. It interacts with LexA causing its activation and leading to its autocatalytic cleavage. The protein is Protein RecA of Xanthomonas oryzae pv. oryzae (strain PXO99A).